The primary structure comprises 793 residues: Protocadherin beta-7 (793 aa).

Residues 1–26 (MEARVERAVQKRQVLFLCVFLGMSWA) form the signal peptide. The Extracellular segment spans residues 27-688 (GAEPLRYFVA…DQANLLTVYL (662 aa)). 5 consecutive Cadherin domains span residues 35-133 (VAEE…APVF), 138-242 (ISLK…APDF), 247-347 (YKVQ…RPEL), 352-451 (LTSP…APAF), and 456-561 (YTLF…SPFV). A glycan (N-linked (GlcNAc...) asparagine) is linked at Asn-169. N-linked (GlcNAc...) asparagine glycans are attached at residues Asn-418 and Asn-436. Residue Asn-567 is glycosylated (N-linked (GlcNAc...) asparagine). The Cadherin 6 domain maps to 568–671 (SSAPCTEPLP…LVDGFSQPYL (104 aa)). A helical transmembrane segment spans residues 689-709 (VVALASVSSLFLLSVLLFVAV). Topologically, residues 710–793 (RLCRRSRAAP…NRPFQNNLGF (84 aa)) are cytoplasmic.

The protein localises to the cell membrane. In terms of biological role, potential calcium-dependent cell-adhesion protein. May be involved in the establishment and maintenance of specific neuronal connections in the brain. This is Protocadherin beta-7 (PCDHB7) from Pan troglodytes (Chimpanzee).